A 292-amino-acid polypeptide reads, in one-letter code: Ubiquinone biosynthesis protein UbiV (292 aa).

[4Fe-4S] cluster-binding residues include cysteine 39, cysteine 180, cysteine 193, and cysteine 197.

Belongs to the peptidase U32 family. UbiV subfamily. As to quaternary structure, forms a heterodimer with UbiU. Requires [4Fe-4S] cluster as cofactor.

Its pathway is cofactor biosynthesis; ubiquinone biosynthesis. Its function is as follows. Required for O(2)-independent ubiquinone (coenzyme Q) biosynthesis. Together with UbiU, is essential for the C6-hydroxylation reaction in the oxygen-independent ubiquinone biosynthesis pathway. This is Ubiquinone biosynthesis protein UbiV from Escherichia coli (strain K12).